Reading from the N-terminus, the 491-residue chain is Chromosomal replication initiator protein DnaA (491 aa).

The segment at 1 to 69 is domain I, interacts with DnaA modulators; it reads MTTWDKCLKK…TIQECHGNDL (69 aa). The segment at 69–154 is domain II; sequence LIIEYSNKKF…KEDEEYSFGL (86 aa). The segment at 155–371 is domain III, AAA+ region; that stretch reads PLKEKYVFDS…GALNRVLTTS (217 aa). ATP is bound by residues glycine 199, glycine 201, lysine 202, and threonine 203. The domain IV, binds dsDNA stretch occupies residues 372-491; the sequence is KFNHKDPTIE…YELLLDKISR (120 aa).

Belongs to the DnaA family. As to quaternary structure, oligomerizes as a right-handed, spiral filament on DNA at oriC.

It is found in the cytoplasm. Plays an essential role in the initiation and regulation of chromosomal replication. ATP-DnaA binds to the origin of replication (oriC) to initiate formation of the DNA replication initiation complex once per cell cycle. Binds the DnaA box (a 9 base pair repeat at the origin) and separates the double-stranded (ds)DNA. Forms a right-handed helical filament on oriC DNA; dsDNA binds to the exterior of the filament while single-stranded (ss)DNA is stabiized in the filament's interior. The ATP-DnaA-oriC complex binds and stabilizes one strand of the AT-rich DNA unwinding element (DUE), permitting loading of DNA polymerase. After initiation quickly degrades to an ADP-DnaA complex that is not apt for DNA replication. Binds acidic phospholipids. This is Chromosomal replication initiator protein DnaA from Francisella tularensis subsp. holarctica (strain FTNF002-00 / FTA).